The sequence spans 59 residues: Small ribosomal subunit protein bS21 (59 aa).

The interval 34–59 (KHEHYEKPSVKRKKKSEAARRRKRSF) is disordered. Positions 43 to 59 (VKRKKKSEAARRRKRSF) are enriched in basic residues.

Belongs to the bacterial ribosomal protein bS21 family.

The protein is Small ribosomal subunit protein bS21 of Desulforudis audaxviator (strain MP104C).